The following is a 196-amino-acid chain: Probable GTP-binding protein EngB (196 aa).

The EngB-type G domain maps to 22-196 (NLPEIALAGR…GNWIEDKISQ (175 aa)). GTP contacts are provided by residues 30–37 (GRSNVGKS), 57–61 (GKTQT), 75–78 (DVPG), 142–145 (TKMD), and 175–177 (FSS). 2 residues coordinate Mg(2+): serine 37 and threonine 59.

Belongs to the TRAFAC class TrmE-Era-EngA-EngB-Septin-like GTPase superfamily. EngB GTPase family. The cofactor is Mg(2+).

Its function is as follows. Necessary for normal cell division and for the maintenance of normal septation. In Lactobacillus acidophilus (strain ATCC 700396 / NCK56 / N2 / NCFM), this protein is Probable GTP-binding protein EngB.